The chain runs to 493 residues: Amidophosphoribosyltransferase (493 aa).

A propeptide spanning residues 1 to 26 is cleaved from the precursor; that stretch reads MIPTQPLTADLDCDLGLERPDRPEEA. C27 (nucleophile) is an active-site residue. The Glutamine amidotransferase type-2 domain maps to 27 to 252; sequence CGVFALYAPG…PGEMVRITDA (226 aa). Residue C268 participates in [4Fe-4S] cluster binding. Residues S315, D377, and D378 each coordinate Mg(2+). [4Fe-4S] cluster-binding residues include C414, C465, and C468.

The protein in the C-terminal section; belongs to the purine/pyrimidine phosphoribosyltransferase family. Mg(2+) is required as a cofactor. [4Fe-4S] cluster serves as cofactor.

It carries out the reaction 5-phospho-beta-D-ribosylamine + L-glutamate + diphosphate = 5-phospho-alpha-D-ribose 1-diphosphate + L-glutamine + H2O. It functions in the pathway purine metabolism; IMP biosynthesis via de novo pathway; N(1)-(5-phospho-D-ribosyl)glycinamide from 5-phospho-alpha-D-ribose 1-diphosphate: step 1/2. Its function is as follows. Catalyzes the formation of phosphoribosylamine from phosphoribosylpyrophosphate (PRPP) and glutamine. This is Amidophosphoribosyltransferase from Synechococcus elongatus (strain ATCC 33912 / PCC 7942 / FACHB-805) (Anacystis nidulans R2).